The sequence spans 331 residues: Ribosomal RNA small subunit methyltransferase H (331 aa).

Residues 39–41 (GGY), Asp56, Phe83, Asp100, and Gln107 contribute to the S-adenosyl-L-methionine site.

Belongs to the methyltransferase superfamily. RsmH family.

The protein resides in the cytoplasm. It catalyses the reaction cytidine(1402) in 16S rRNA + S-adenosyl-L-methionine = N(4)-methylcytidine(1402) in 16S rRNA + S-adenosyl-L-homocysteine + H(+). Its function is as follows. Specifically methylates the N4 position of cytidine in position 1402 (C1402) of 16S rRNA. The chain is Ribosomal RNA small subunit methyltransferase H from Bartonella bacilliformis (strain ATCC 35685 / KC583 / Herrer 020/F12,63).